A 207-amino-acid polypeptide reads, in one-letter code: Small ribosomal subunit protein uS4 (207 aa).

Residues lysine 31 to glutamine 55 form a disordered region. Over residues glycine 42–glycine 53 the composition is skewed to polar residues. Residues serine 97–leucine 160 form the S4 RNA-binding domain.

The protein belongs to the universal ribosomal protein uS4 family. In terms of assembly, part of the 30S ribosomal subunit. Contacts protein S5. The interaction surface between S4 and S5 is involved in control of translational fidelity.

In terms of biological role, one of the primary rRNA binding proteins, it binds directly to 16S rRNA where it nucleates assembly of the body of the 30S subunit. Its function is as follows. With S5 and S12 plays an important role in translational accuracy. This is Small ribosomal subunit protein uS4 from Burkholderia thailandensis (strain ATCC 700388 / DSM 13276 / CCUG 48851 / CIP 106301 / E264).